Consider the following 1017-residue polypeptide: Stereoselective keto-reductase af490 (1017 aa).

The N-terminal hotdog fold stretch occupies residues 6–138 (NELSGSQVPG…GRLRMTFAGH (133 aa)). In terms of domain architecture, PKS/mFAS DH spans 6-311 (NELSGSQVPG…MSPIAPSTEK (306 aa)). A dehydratase (DH) region spans residues 8–306 (LSGSQVPGAT…LEGLTMSPIA (299 aa)). The interval 153–311 (LRPVSISPFY…MSPIAPSTEK (159 aa)) is C-terminal hotdog fold. The segment at 532–720 (QIRFLRAPFD…VQGGRLLIPR (189 aa)) is ketoreductase (KR).

The catalysed reaction is fumagillol + NADP(+) = 5-dehydrofumagillol + NADPH + H(+). The protein operates within secondary metabolite biosynthesis; terpenoid biosynthesis. In terms of biological role, stereoselective keto-reductase; part of the gene cluster that mediates the biosynthesis of fumagillin, a meroterpenoid that has numerous biological activities including irreversible inhibition of human type 2 methionine aminopeptidase (METAP2). Within the pathway, the keto-reductase af490 acts as a 5-dehydrofumagillol 5-reductase that stereoselectively reduces 5-keto-fumagillol to 5R-hydroxy-seco-sesquiterpene. The pathway begins with the conversion of farnesyl pyrophosphate (FPP) to beta-trans-bergamotene by the membrane-bound beta-trans-bergamotene synthase af520. The multifunctional cytochrome P450 monooxygenase af510 then converts beta-trans-bergamotene into 5-keto-demethoxyfumagillol via several oxydation steps. 5-keto-demethoxyfumagillol is then subjected to successive C-6 hydroxylation and O-methylation by the dioxygenase af480 and O-methyltransferase af390-400, respectively, to yield 5-keto-fumagillol, which is then stereoselectively reduced by the keto-reductase af490 to 5R-hydroxy-seco-sesquiterpene. The next step is the polyketide transferase af380-catalyzed transfer of a dodecapentaenoyl group synthesized by the polyketide synthase af370 onto 5R-hydroxy-seco-sesquiterpene which leads to the production of prefumagillin. Finally, oxidative cleavage by the monooxygenase af470 converts prefumagillin to fumagillin. This is Stereoselective keto-reductase af490 from Aspergillus fumigatus (strain ATCC MYA-4609 / CBS 101355 / FGSC A1100 / Af293) (Neosartorya fumigata).